Reading from the N-terminus, the 544-residue chain is MAKQLLFNEEARKKLLSGVEQISSAVKVTLGPKGRNVLLEKGYGAPTVTKDGVSVAKEVELEDPFENMGAQLLKEVATKTNDVAGDGTTTATVLAYSMVREGLKAVAAGMTPLELKRGMDKAVAIAVDDIKQNSKGIKSNEEVAHVASVSANNDKEIGRILASAIEKVGNDGVIDVDEAQTMETVTEFVEGMQFDRGYISSYFVTDRDRMETVYENPYILIYDKSISTMKDLLPLLEKIAQTGRPLLIIAEDVEGEALATLVVNSLRGTLKTCAVKAPGFGDRRKEMLEDIAILSGGQVISEDLGLKLESADIALLGQAKSVKVDKENTTIIDGSGKSKDIKDRIEQIKKQIEASTSDYDSEKLKERLAKLSGGVAVIKIGAVTEVEMKEKKHRVEDALNATRAAIEEGIVAGGGLALIQAAAALEKADLSGLTPDEAVGFKIVRRALEEPIRQISENAGIDGAVVAEKAKEKRGIGFDASKMEWVDMIKVGIIDPAKVTRSALQNAASVSGLLLTTECAIAAIPEKSSSTPPAPDMGGMGGMY.

ATP is bound by residues 29-32 (TLGP), K50, 86-90 (DGTTT), G414, and D495.

This sequence belongs to the chaperonin (HSP60) family. In terms of assembly, forms a cylinder of 14 subunits composed of two heptameric rings stacked back-to-back. Interacts with the co-chaperonin GroES.

The protein localises to the cytoplasm. It catalyses the reaction ATP + H2O + a folded polypeptide = ADP + phosphate + an unfolded polypeptide.. Functionally, together with its co-chaperonin GroES, plays an essential role in assisting protein folding. The GroEL-GroES system forms a nano-cage that allows encapsulation of the non-native substrate proteins and provides a physical environment optimized to promote and accelerate protein folding. The sequence is that of Chaperonin GroEL from Treponema pallidum subsp. pallidum (strain SS14).